Here is a 247-residue protein sequence, read N- to C-terminus: tRNA pseudouridine synthase A (247 aa).

Catalysis depends on Asp-52, which acts as the Nucleophile. Residue Tyr-111 coordinates substrate.

This sequence belongs to the tRNA pseudouridine synthase TruA family. Homodimer.

The catalysed reaction is uridine(38/39/40) in tRNA = pseudouridine(38/39/40) in tRNA. Formation of pseudouridine at positions 38, 39 and 40 in the anticodon stem and loop of transfer RNAs. The protein is tRNA pseudouridine synthase A of Caulobacter vibrioides (strain ATCC 19089 / CIP 103742 / CB 15) (Caulobacter crescentus).